An 87-amino-acid chain; its full sequence is Large ribosomal subunit protein bL31B (87 aa).

This sequence belongs to the bacterial ribosomal protein bL31 family. Type B subfamily. As to quaternary structure, part of the 50S ribosomal subunit.

The sequence is that of Large ribosomal subunit protein bL31B from Burkholderia vietnamiensis (strain G4 / LMG 22486) (Burkholderia cepacia (strain R1808)).